The primary structure comprises 870 residues: UvrABC system protein B (870 aa).

Positions 20–410 constitute a Helicase ATP-binding domain; the sequence is EGVDNNDRTQ…VFAEQVIRPT (391 aa). Residue 33-40 coordinates ATP; it reads GVTGSGKT. The Beta-hairpin motif lies at 86-109; that stretch reads YYDYYQPEAYVPRTDTFIEKESSI. In terms of domain architecture, Helicase C-terminal spans 425-591; the sequence is QVDDVVGEIR…SVKSRISDIL (167 aa). In terms of domain architecture, UVR spans 620 to 655; the sequence is KAHLDAMEKQMRDAAANLDFEKAARIRDEIKRLREM. Disordered stretches follow at residues 671-698 and 741-870; these read ESPVSGREKGKHNKGVAKHRTAEEQERF and AKPS…RPGK. The span at 679-689 shows a compositional bias: basic residues; that stretch reads KGKHNKGVAKH. Composition is skewed to basic and acidic residues over residues 793–808 and 827–836; these read NSLDEMTVRRTEKPVE and TDVKDRDDSA. A compositionally biased stretch (basic residues) spans 858–870; the sequence is EKRRPGKTGRPGK.

The protein belongs to the UvrB family. In terms of assembly, forms a heterotetramer with UvrA during the search for lesions. Interacts with UvrC in an incision complex.

The protein localises to the cytoplasm. Functionally, the UvrABC repair system catalyzes the recognition and processing of DNA lesions. A damage recognition complex composed of 2 UvrA and 2 UvrB subunits scans DNA for abnormalities. Upon binding of the UvrA(2)B(2) complex to a putative damaged site, the DNA wraps around one UvrB monomer. DNA wrap is dependent on ATP binding by UvrB and probably causes local melting of the DNA helix, facilitating insertion of UvrB beta-hairpin between the DNA strands. Then UvrB probes one DNA strand for the presence of a lesion. If a lesion is found the UvrA subunits dissociate and the UvrB-DNA preincision complex is formed. This complex is subsequently bound by UvrC and the second UvrB is released. If no lesion is found, the DNA wraps around the other UvrB subunit that will check the other stand for damage. The polypeptide is UvrABC system protein B (Mesorhizobium japonicum (strain LMG 29417 / CECT 9101 / MAFF 303099) (Mesorhizobium loti (strain MAFF 303099))).